Consider the following 119-residue polypeptide: Large ribosomal subunit protein bL19c (119 aa).

It belongs to the bacterial ribosomal protein bL19 family.

Its subcellular location is the plastid. It is found in the chloroplast. The sequence is that of Large ribosomal subunit protein bL19c from Mesostigma viride (Green alga).